Reading from the N-terminus, the 263-residue chain is Acyl-[acyl-carrier-protein]--UDP-N-acetylglucosamine O-acyltransferase (263 aa).

This sequence belongs to the transferase hexapeptide repeat family. LpxA subfamily. Homotrimer.

The protein resides in the cytoplasm. It catalyses the reaction a (3R)-hydroxyacyl-[ACP] + UDP-N-acetyl-alpha-D-glucosamine = a UDP-3-O-[(3R)-3-hydroxyacyl]-N-acetyl-alpha-D-glucosamine + holo-[ACP]. The protein operates within glycolipid biosynthesis; lipid IV(A) biosynthesis; lipid IV(A) from (3R)-3-hydroxytetradecanoyl-[acyl-carrier-protein] and UDP-N-acetyl-alpha-D-glucosamine: step 1/6. Its function is as follows. Involved in the biosynthesis of lipid A, a phosphorylated glycolipid that anchors the lipopolysaccharide to the outer membrane of the cell. This is Acyl-[acyl-carrier-protein]--UDP-N-acetylglucosamine O-acyltransferase from Campylobacter lari (strain RM2100 / D67 / ATCC BAA-1060).